The following is a 305-amino-acid chain: UPF0282 protein Tneu_0934 (305 aa).

Belongs to the UPF0282 family.

This Pyrobaculum neutrophilum (strain DSM 2338 / JCM 9278 / NBRC 100436 / V24Sta) (Thermoproteus neutrophilus) protein is UPF0282 protein Tneu_0934.